A 354-amino-acid polypeptide reads, in one-letter code: Small ribosomal subunit biogenesis GTPase RsgA 1 (354 aa).

A compositionally biased stretch (basic residues) spans 1-24 (MAKKKKLTKGQVRRVRSNQQKRLK). Positions 1 to 28 (MAKKKKLTKGQVRRVRSNQQKRLKKQEE) are disordered. The CP-type G domain occupies 113–274 (YDGLKPVAAN…LIDSPGVREF (162 aa)). GTP is bound by residues 160–163 (NKVD) and 214–222 (GQSGVGKSS). Positions 298, 303, 305, and 311 each coordinate Zn(2+).

The protein belongs to the TRAFAC class YlqF/YawG GTPase family. RsgA subfamily. In terms of assembly, monomer. Associates with 30S ribosomal subunit, binds 16S rRNA. Requires Zn(2+) as cofactor.

Its subcellular location is the cytoplasm. In terms of biological role, one of several proteins that assist in the late maturation steps of the functional core of the 30S ribosomal subunit. Helps release RbfA from mature subunits. May play a role in the assembly of ribosomal proteins into the subunit. Circularly permuted GTPase that catalyzes slow GTP hydrolysis, GTPase activity is stimulated by the 30S ribosomal subunit. This Vibrio parahaemolyticus serotype O3:K6 (strain RIMD 2210633) protein is Small ribosomal subunit biogenesis GTPase RsgA 1.